Consider the following 298-residue polypeptide: Iron/alpha-ketoglutarate-dependent dioxygenase ausO (298 aa).

Residues H130, D132, and H211 each contribute to the Fe cation site.

This sequence belongs to the PhyH family. In terms of assembly, homodimer. Fe cation serves as cofactor.

Its pathway is secondary metabolite biosynthesis; terpenoid biosynthesis. Iron/alpha-ketoglutarate-dependent dioxygenase; part of the gene cluster that mediates the biosynthesis of calidodehydroaustin, a fungal meroterpenoid. The first step of the pathway is the synthesis of 3,5-dimethylorsellinic acid by the polyketide synthase ausA. 3,5-dimethylorsellinic acid is then prenylated by the polyprenyl transferase ausN. Further epoxidation by the FAD-dependent monooxygenase ausM and cyclization by the probable terpene cyclase ausL lead to the formation of protoaustinoid A. Protoaustinoid A is then oxidized to spiro-lactone preaustinoid A3 by the combined action of the FAD-binding monooxygenases ausB and ausC, and the dioxygenase ausE. Acid-catalyzed keto-rearrangement and ring contraction of the tetraketide portion of preaustinoid A3 by ausJ lead to the formation of preaustinoid A4. The aldo-keto reductase ausK, with the help of ausH, is involved in the next step by transforming preaustinoid A4 into isoaustinone which is in turn hydroxylated by the P450 monooxygenase ausI to form austinolide. The cytochrome P450 monooxygenase ausG modifies austinolide to austinol. Austinol is further acetylated to austin by the O-acetyltransferase ausP, which spontaneously changes to dehydroaustin. The cytochrome P450 monooxygenase ausR then converts dehydroaustin is into 7-dehydrodehydroaustin. The hydroxylation catalyzed by ausR permits the O-acetyltransferase ausQ to add an additional acetyl group to the molecule, leading to the formation of acetoxydehydroaustin. The short chain dehydrogenase ausT catalyzes the reduction of the double bond present between carbon atoms 1 and 2 to convert 7-dehydrodehydroaustin into 1,2-dihydro-7-hydroxydehydroaustin. AusQ catalyzes not only an acetylation reaction but also the addition of the PKS ausV diketide product to 1,2-dihydro-7-hydroxydehydroaustin, forming precalidodehydroaustin. Finally, the iron/alpha-ketoglutarate-dependent dioxygenase converts precalidodehydroaustin into calidodehydroaustin. This is Iron/alpha-ketoglutarate-dependent dioxygenase ausO from Aspergillus calidoustus.